A 256-amino-acid chain; its full sequence is Ubiquinone biosynthesis O-methyltransferase (256 aa).

S-adenosyl-L-methionine-binding residues include R44, G80, D101, and M144.

This sequence belongs to the methyltransferase superfamily. UbiG/COQ3 family.

It catalyses the reaction a 3-demethylubiquinol + S-adenosyl-L-methionine = a ubiquinol + S-adenosyl-L-homocysteine + H(+). The catalysed reaction is a 3-(all-trans-polyprenyl)benzene-1,2-diol + S-adenosyl-L-methionine = a 2-methoxy-6-(all-trans-polyprenyl)phenol + S-adenosyl-L-homocysteine + H(+). Its pathway is cofactor biosynthesis; ubiquinone biosynthesis. O-methyltransferase that catalyzes the 2 O-methylation steps in the ubiquinone biosynthetic pathway. This chain is Ubiquinone biosynthesis O-methyltransferase, found in Methylocella silvestris (strain DSM 15510 / CIP 108128 / LMG 27833 / NCIMB 13906 / BL2).